The chain runs to 284 residues: N-acylphosphatidylethanolamine synthase (284 aa).

A helical membrane pass occupies residues 21-37; sequence TVIMAVSAFAKAVANLC. The HXXXXD motif signature appears at 67-72; sequence HMSTLD. Positions 122 to 163 are hydrophilic; that stretch reads GGGIYQENMNEALQRLKDGSWLHTFPEGKVFQDDVPIRRLKW.

Belongs to the taffazin family. As to expression, essentially present in young tissues. Expressed in roots, cotyledons, leaves, and shoot and root apical meristems.

The protein localises to the cell membrane. Acyltransferase that catalyzes the N-acylation of phosphatidylethanolamine to form N-acylphosphatidylethanolamine (N-acyl-PE) (e.g. NAPEs containing C16:0, C16:1, C18:0, and C18:1). Also mediates the formation of acylphosphatidylglycerol (acyl-PG) from lysoglycerophospholipid by O-acylation. Uses acyl-CoA as acyl donors. Acylates 1-acyllysophosphatidylethanolamine (1-acyllyso-PE) and 1-acyllysophosphatidylglycerol (1-acyllyso-PG) at the sn-2-position. This chain is N-acylphosphatidylethanolamine synthase, found in Arabidopsis thaliana (Mouse-ear cress).